We begin with the raw amino-acid sequence, 375 residues long: Glutamate 5-kinase (375 aa).

Lys17 lines the ATP pocket. Residues Ser58, Asp145, and Asn157 each coordinate substrate. Residues 177 to 178 and 219 to 225 each bind ATP; these read SD and TGGMVTK. The 79-residue stretch at 281-359 folds into the PUA domain; the sequence is QGALTLDDGA…RELARELGPA (79 aa).

It belongs to the glutamate 5-kinase family.

Its subcellular location is the cytoplasm. The enzyme catalyses L-glutamate + ATP = L-glutamyl 5-phosphate + ADP. It participates in amino-acid biosynthesis; L-proline biosynthesis; L-glutamate 5-semialdehyde from L-glutamate: step 1/2. Its function is as follows. Catalyzes the transfer of a phosphate group to glutamate to form L-glutamate 5-phosphate. The polypeptide is Glutamate 5-kinase (Streptomyces avermitilis (strain ATCC 31267 / DSM 46492 / JCM 5070 / NBRC 14893 / NCIMB 12804 / NRRL 8165 / MA-4680)).